The primary structure comprises 416 residues: Exodeoxyribonuclease 7 large subunit (416 aa).

Residues methionine 1–valine 21 form a disordered region.

The protein belongs to the XseA family. As to quaternary structure, heterooligomer composed of large and small subunits.

The protein resides in the cytoplasm. The catalysed reaction is Exonucleolytic cleavage in either 5'- to 3'- or 3'- to 5'-direction to yield nucleoside 5'-phosphates.. In terms of biological role, bidirectionally degrades single-stranded DNA into large acid-insoluble oligonucleotides, which are then degraded further into small acid-soluble oligonucleotides. In Deinococcus radiodurans (strain ATCC 13939 / DSM 20539 / JCM 16871 / CCUG 27074 / LMG 4051 / NBRC 15346 / NCIMB 9279 / VKM B-1422 / R1), this protein is Exodeoxyribonuclease 7 large subunit.